The sequence spans 126 residues: Fluoride-specific ion channel FluC 2 (126 aa).

Transmembrane regions (helical) follow at residues 5–25 (TALTVAIWIGVMLIGGIGSVL), 44–64 (GTLTVNITGAALLGFLAGLAL), 68–88 (AALLAGTGFVGAYTTFSTWML), and 99–119 (MVSALANIVVSVVLGLAAALL). The Na(+) site is built by glycine 78 and threonine 81.

Belongs to the fluoride channel Fluc/FEX (TC 1.A.43) family.

The protein localises to the cell membrane. It catalyses the reaction fluoride(in) = fluoride(out). Na(+) is not transported, but it plays an essential structural role and its presence is essential for fluoride channel function. Functionally, fluoride-specific ion channel. Important for reducing fluoride concentration in the cell, thus reducing its toxicity. The sequence is that of Fluoride-specific ion channel FluC 2 from Mycobacterium bovis (strain ATCC BAA-935 / AF2122/97).